We begin with the raw amino-acid sequence, 476 residues long: Ankyrin repeat, SAM and basic leucine zipper domain-containing protein 1 (476 aa).

A phosphoserine mark is found at Ser-18 and Ser-21. 6 ANK repeats span residues 46-75 (EKNE…SIDS), 79-108 (YGWT…NASF), 111-145 (DKQT…DPNV), 149-178 (RLMT…EVNT), 182-211 (NGYT…DKML), and 215-244 (DGKT…PLEG). The SAM domain maps to 273 to 335 (SYAAFEDLEI…KILAALKELE (63 aa)).

Interacts with DDX4, PIWIL1, RANBP9 and TDRD1.

Its subcellular location is the cytoplasm. Its function is as follows. Plays a central role during spermatogenesis by repressing transposable elements and preventing their mobilization, which is essential for the germline integrity. Acts via the piRNA metabolic process, which mediates the repression of transposable elements during meiosis by forming complexes composed of piRNAs and Piwi proteins and governs the methylation and subsequent repression of transposons. Its association with pi-bodies suggests a participation in the primary piRNAs metabolic process. Required prior to the pachytene stage to facilitate the production of multiple types of piRNAs, including those associated with repeats involved in the regulation of retrotransposons. May act by mediating protein-protein interactions during germ cell maturation. The sequence is that of Ankyrin repeat, SAM and basic leucine zipper domain-containing protein 1 (ASZ1) from Dasypus novemcinctus (Nine-banded armadillo).